A 545-amino-acid chain; its full sequence is Probable protein kinase UbiB (545 aa).

Residues 124–502 (DFDETPLASA…RRSQGLARFY (379 aa)) form the Protein kinase domain. Residues 130 to 138 (LASASIAQV) and lysine 153 each bind ATP. Catalysis depends on aspartate 288, which acts as the Proton acceptor. The next 2 membrane-spanning stretches (helical) occupy residues 498–517 (LARF…AILF) and 521–540 (VETI…LLGW).

This sequence belongs to the ABC1 family. UbiB subfamily.

The protein resides in the cell inner membrane. It functions in the pathway cofactor biosynthesis; ubiquinone biosynthesis [regulation]. Its function is as follows. Is probably a protein kinase regulator of UbiI activity which is involved in aerobic coenzyme Q (ubiquinone) biosynthesis. The sequence is that of Probable protein kinase UbiB from Photobacterium profundum (strain SS9).